We begin with the raw amino-acid sequence, 297 residues long: Probable transcription factor vicR (297 aa).

Disordered stretches follow at residues 45 to 80 (LPGL…HSET) and 100 to 134 (TNQA…KNVH). The segment covering 58–67 (QKEEMRRKNA) has biased composition (basic and acidic residues). Residues 69–80 (AQMQNDSNHSET) show a composition bias toward polar residues. Residues 110-124 (RSREDITNSRAERHS) are compositionally biased toward basic and acidic residues.

It is found in the nucleus. Its function is as follows. Probable transcription factor; part of the gene cluster that mediates the biosynthesis of the secondary metabolite victorin, the molecular basis for Victoria blight of oats. May play a role in the regulation of the production of victorin. The sequence is that of Probable transcription factor vicR from Bipolaris victoriae (strain FI3) (Victoria blight of oats agent).